The primary structure comprises 74 residues: Cytochrome c oxidase subunit 2 (74 aa).

Residues 1-14 (MAHPSQLGLQDAAS) are Mitochondrial intermembrane-facing. Residues 15-45 (PVMEELLHFHDHALMIVFLISTLVLYIIVAM) traverse the membrane as a helical segment. Residues 46–74 (VSTKLTDKYTIDSQEIEIVWTVLPAVILI) lie on the Mitochondrial matrix side of the membrane.

This sequence belongs to the cytochrome c oxidase subunit 2 family. In terms of assembly, component of the cytochrome c oxidase (complex IV, CIV), a multisubunit enzyme composed of 14 subunits. The complex is composed of a catalytic core of 3 subunits MT-CO1, MT-CO2 and MT-CO3, encoded in the mitochondrial DNA, and 11 supernumerary subunits COX4I, COX5A, COX5B, COX6A, COX6B, COX6C, COX7A, COX7B, COX7C, COX8 and NDUFA4, which are encoded in the nuclear genome. The complex exists as a monomer or a dimer and forms supercomplexes (SCs) in the inner mitochondrial membrane with NADH-ubiquinone oxidoreductase (complex I, CI) and ubiquinol-cytochrome c oxidoreductase (cytochrome b-c1 complex, complex III, CIII), resulting in different assemblies (supercomplex SCI(1)III(2)IV(1) and megacomplex MCI(2)III(2)IV(2)). Found in a complex with TMEM177, COA6, COX18, COX20, SCO1 and SCO2. Interacts with TMEM177 in a COX20-dependent manner. Interacts with COX20. Interacts with COX16. Cu cation is required as a cofactor.

The protein localises to the mitochondrion inner membrane. It carries out the reaction 4 Fe(II)-[cytochrome c] + O2 + 8 H(+)(in) = 4 Fe(III)-[cytochrome c] + 2 H2O + 4 H(+)(out). In terms of biological role, component of the cytochrome c oxidase, the last enzyme in the mitochondrial electron transport chain which drives oxidative phosphorylation. The respiratory chain contains 3 multisubunit complexes succinate dehydrogenase (complex II, CII), ubiquinol-cytochrome c oxidoreductase (cytochrome b-c1 complex, complex III, CIII) and cytochrome c oxidase (complex IV, CIV), that cooperate to transfer electrons derived from NADH and succinate to molecular oxygen, creating an electrochemical gradient over the inner membrane that drives transmembrane transport and the ATP synthase. Cytochrome c oxidase is the component of the respiratory chain that catalyzes the reduction of oxygen to water. Electrons originating from reduced cytochrome c in the intermembrane space (IMS) are transferred via the dinuclear copper A center (CU(A)) of subunit 2 and heme A of subunit 1 to the active site in subunit 1, a binuclear center (BNC) formed by heme A3 and copper B (CU(B)). The BNC reduces molecular oxygen to 2 water molecules using 4 electrons from cytochrome c in the IMS and 4 protons from the mitochondrial matrix. This Megalops atlanticus (Tarpon) protein is Cytochrome c oxidase subunit 2 (mt-co2).